Here is a 144-residue protein sequence, read N- to C-terminus: D-aminoacyl-tRNA deacylase (144 aa).

The short motif at 136–137 (GP) is the Gly-cisPro motif, important for rejection of L-amino acids element.

Belongs to the DTD family. Homodimer.

It localises to the cytoplasm. The enzyme catalyses glycyl-tRNA(Ala) + H2O = tRNA(Ala) + glycine + H(+). It carries out the reaction a D-aminoacyl-tRNA + H2O = a tRNA + a D-alpha-amino acid + H(+). In terms of biological role, an aminoacyl-tRNA editing enzyme that deacylates mischarged D-aminoacyl-tRNAs. Also deacylates mischarged glycyl-tRNA(Ala), protecting cells against glycine mischarging by AlaRS. Acts via tRNA-based rather than protein-based catalysis; rejects L-amino acids rather than detecting D-amino acids in the active site. By recycling D-aminoacyl-tRNA to D-amino acids and free tRNA molecules, this enzyme counteracts the toxicity associated with the formation of D-aminoacyl-tRNA entities in vivo and helps enforce protein L-homochirality. The sequence is that of D-aminoacyl-tRNA deacylase from Haemophilus influenzae (strain ATCC 51907 / DSM 11121 / KW20 / Rd).